The chain runs to 2511 residues: Fatty acid synthase (2511 aa).

Met-1 carries the N-acetylmethionine modification. The Ketosynthase family 3 (KS3) domain occupies 1-406; the sequence is MEEVVIAGMS…GSNVHIILRP (406 aa). Residue Ser-63 is modified to Phosphoserine. Lys-70 carries the post-translational modification N6-acetyllysine. Residue Cys-161 is the For beta-ketoacyl synthase activity of the active site. Ser-207 is modified (phosphoserine). Catalysis depends on His-293, which acts as the For beta-ketoacyl synthase activity. Lys-298 bears the N6-acetyllysine mark. His-331 functions as the For beta-ketoacyl synthase activity in the catalytic mechanism. Residues 429-817 are acyl and malonyl transferases; sequence RTPEAVQKLL…IDANPNALFP (389 aa). An N6-acetyllysine mark is found at Lys-436 and Lys-528. Ser-581 serves as the catalytic For malonyltransferase activity. An acyl-CoA-binding positions include 647–648 and Phe-671; that span reads DT. At Lys-673 the chain carries N6-acetyllysine. A Phosphoserine modification is found at Ser-725. Arg-773 is a binding site for an acyl-CoA. An N-terminal hotdog fold region spans residues 838–966; sequence HSLAWDVPAA…KVYQWDDPDP (129 aa). The region spanning 838–1108 is the PKS/mFAS DH domain; that stretch reads HSLAWDVPAA…TESAPRRQQE (271 aa). His-878 functions as the Proton acceptor; for dehydratase activity in the catalytic mechanism. The tract at residues 981–1108 is C-terminal hotdog fold; that stretch reads EPLFLAQAEV…TESAPRRQQE (128 aa). Residue Lys-992 is modified to N6-acetyllysine. Catalysis depends on Asp-1031, which acts as the Proton donor; for dehydratase activity. Residues Ser-1174 and Ser-1411 each carry the phosphoserine modification. Cys-1471 is modified (S-nitrosocysteine). Ser-1584 and Ser-1594 each carry phosphoserine. Residues 1635 to 1863 are enoyl reductase; the sequence is DVPSNWTLEE…VQVLAEEPEA (229 aa). 1671–1688 is a binding site for NADP(+); sequence LLIHSGSGGVGQAAIAIA. At Lys-1704 the chain carries N6-(pyridoxal phosphate)lysine; alternate. Lys-1704 is subject to N6-acetyllysine; alternate. Residues Lys-1771 and Lys-1847 each carry the N6-acetyllysine modification. A beta-ketoacyl reductase region spans residues 1864 to 2118; it reads VLKGAKPKLM…FVLAEKAAAY (255 aa). 1886–1901 contributes to the NADP(+) binding site; it reads SYIIAGGLGGFGLELA. Lys-1995 carries the N6-acetyllysine modification. Residue Cys-2091 is modified to S-nitrosocysteine. The Carrier domain occupies 2121 to 2198; sequence RDSQRDLVEA…ELSSKADEAS (78 aa). An O-(pantetheine 4'-phosphoryl)serine; alternate modification is found at Ser-2156. A Phosphoserine; alternate modification is found at Ser-2156. Ser-2198 carries the phosphoserine modification. Phosphothreonine occurs at positions 2204 and 2215. The segment at 2207-2511 is thioesterase; the sequence is EDGLAQQQTQ…AEPRVSVREG (305 aa). Ser-2236 is modified (phosphoserine). The active-site For thioesterase activity is the Ser-2308. Lys-2391 carries the post-translational modification N6-acetyllysine. Lys-2449 participates in a covalent cross-link: Glycyl lysine isopeptide (Lys-Gly) (interchain with G-Cter in SUMO2). His-2481 serves as the catalytic For thioesterase activity.

As to quaternary structure, homodimer which is arranged in a head to tail fashion. Interacts with CEACAM1; this interaction is insulin and phosphorylation-dependent; reduces fatty-acid synthase activity. S-nitrosylation of Fatty acid synthase at cysteine residues Cys-1471 or Cys-2091 is important for the enzyme dimerization. In adipocytes, S-nitrosylation of Fatty acid synthase occurs under physiological conditions and gradually increases during adipogenesis. In terms of tissue distribution, ubiquitous. Prominent expression in brain, lung, liver and mammary gland.

Its subcellular location is the cytoplasm. The protein resides in the melanosome. It catalyses the reaction acetyl-CoA + n malonyl-CoA + 2n NADPH + 2n H(+) = a long-chain fatty acid + (n+1) CoA + n CO2 + 2n NADP(+).. The enzyme catalyses holo-[ACP] + acetyl-CoA = acetyl-[ACP] + CoA. The catalysed reaction is holo-[ACP] + malonyl-CoA = malonyl-[ACP] + CoA. It carries out the reaction a fatty acyl-[ACP] + malonyl-[ACP] + H(+) = a 3-oxoacyl-[ACP] + holo-[ACP] + CO2. It catalyses the reaction a (3R)-hydroxyacyl-[ACP] + NADP(+) = a 3-oxoacyl-[ACP] + NADPH + H(+). The enzyme catalyses a (3R)-hydroxyacyl-[ACP] = a (2E)-enoyl-[ACP] + H2O. The catalysed reaction is a 2,3-saturated acyl-[ACP] + NADP(+) = a (2E)-enoyl-[ACP] + NADPH + H(+). It carries out the reaction hexadecanoyl-[ACP] + H2O = hexadecanoate + holo-[ACP] + H(+). It catalyses the reaction acetyl-[ACP] + malonyl-[ACP] + H(+) = 3-oxobutanoyl-[ACP] + holo-[ACP] + CO2. The enzyme catalyses 3-oxobutanoyl-[ACP] + NADPH + H(+) = (3R)-hydroxybutanoyl-[ACP] + NADP(+). The catalysed reaction is (3R)-hydroxybutanoyl-[ACP] = (2E)-butenoyl-[ACP] + H2O. It carries out the reaction (2E)-butenoyl-[ACP] + NADPH + H(+) = butanoyl-[ACP] + NADP(+). It catalyses the reaction butanoyl-[ACP] + malonyl-[ACP] + H(+) = 3-oxohexanoyl-[ACP] + holo-[ACP] + CO2. The enzyme catalyses 3-oxohexanoyl-[ACP] + NADPH + H(+) = (3R)-hydroxyhexanoyl-[ACP] + NADP(+). The catalysed reaction is (3R)-hydroxyhexanoyl-[ACP] = (2E)-hexenoyl-[ACP] + H2O. It carries out the reaction (2E)-hexenoyl-[ACP] + NADPH + H(+) = hexanoyl-[ACP] + NADP(+). It catalyses the reaction hexanoyl-[ACP] + malonyl-[ACP] + H(+) = 3-oxooctanoyl-[ACP] + holo-[ACP] + CO2. The enzyme catalyses 3-oxooctanoyl-[ACP] + NADPH + H(+) = (3R)-hydroxyoctanoyl-[ACP] + NADP(+). The catalysed reaction is (3R)-hydroxyoctanoyl-[ACP] = (2E)-octenoyl-[ACP] + H2O. It carries out the reaction (2E)-octenoyl-[ACP] + NADPH + H(+) = octanoyl-[ACP] + NADP(+). It catalyses the reaction octanoyl-[ACP] + malonyl-[ACP] + H(+) = 3-oxodecanoyl-[ACP] + holo-[ACP] + CO2. The enzyme catalyses 3-oxodecanoyl-[ACP] + NADPH + H(+) = (3R)-hydroxydecanoyl-[ACP] + NADP(+). The catalysed reaction is (3R)-hydroxydecanoyl-[ACP] = (2E)-decenoyl-[ACP] + H2O. It carries out the reaction (2E)-decenoyl-[ACP] + NADPH + H(+) = decanoyl-[ACP] + NADP(+). It catalyses the reaction decanoyl-[ACP] + malonyl-[ACP] + H(+) = 3-oxododecanoyl-[ACP] + holo-[ACP] + CO2. The enzyme catalyses 3-oxododecanoyl-[ACP] + NADPH + H(+) = (3R)-hydroxydodecanoyl-[ACP] + NADP(+). The catalysed reaction is (3R)-hydroxydodecanoyl-[ACP] = (2E)-dodecenoyl-[ACP] + H2O. It carries out the reaction (2E)-dodecenoyl-[ACP] + NADPH + H(+) = dodecanoyl-[ACP] + NADP(+). It catalyses the reaction dodecanoyl-[ACP] + malonyl-[ACP] + H(+) = 3-oxotetradecanoyl-[ACP] + holo-[ACP] + CO2. The enzyme catalyses 3-oxotetradecanoyl-[ACP] + NADPH + H(+) = (3R)-hydroxytetradecanoyl-[ACP] + NADP(+). The catalysed reaction is (3R)-hydroxytetradecanoyl-[ACP] = (2E)-tetradecenoyl-[ACP] + H2O. It carries out the reaction (2E)-tetradecenoyl-[ACP] + NADPH + H(+) = tetradecanoyl-[ACP] + NADP(+). It catalyses the reaction tetradecanoyl-[ACP] + malonyl-[ACP] + H(+) = 3-oxohexadecanoyl-[ACP] + holo-[ACP] + CO2. The enzyme catalyses 3-oxohexadecanoyl-[ACP] + NADPH + H(+) = (3R)-hydroxyhexadecanoyl-[ACP] + NADP(+). The catalysed reaction is (3R)-hydroxyhexadecanoyl-[ACP] = (2E)-hexadecenoyl-[ACP] + H2O. It carries out the reaction (2E)-hexadecenoyl-[ACP] + NADPH + H(+) = hexadecanoyl-[ACP] + NADP(+). It catalyses the reaction hexadecanoyl-[ACP] + malonyl-[ACP] + H(+) = 3-oxooctadecanoyl-[ACP] + holo-[ACP] + CO2. The enzyme catalyses 3-oxooctadecanoyl-[ACP] + NADPH + H(+) = (3R)-hydroxyoctadecanoyl-[ACP] + NADP(+). The catalysed reaction is (3R)-hydroxyoctadecanoyl-[ACP] = (2E)-octadecenoyl-[ACP] + H2O. It carries out the reaction (2E)-octadecenoyl-[ACP] + NADPH + H(+) = octadecanoyl-[ACP] + NADP(+). It catalyses the reaction tetradecanoyl-[ACP] + H2O = tetradecanoate + holo-[ACP] + H(+). The enzyme catalyses octadecanoyl-[ACP] + H2O = octadecanoate + holo-[ACP] + H(+). Its pathway is lipid metabolism; fatty acid biosynthesis. Its activity is regulated as follows. Activated by S-nitrosylation which promotes enzyme dimerization. Cerulenin, a potent non-competitive pharmacological inhibitor of FAS, binds covalently to the active site of the condensing enzyme region, inactivating a key enzyme step in fatty acid synthesis. Functionally, fatty acid synthetase is a multifunctional enzyme that catalyzes the de novo biosynthesis of long-chain saturated fatty acids starting from acetyl-CoA and malonyl-CoA in the presence of NADPH. This multifunctional protein contains 7 catalytic activities and a site for the binding of the prosthetic group 4'-phosphopantetheine of the acyl carrier protein ([ACP]) domain. In terms of biological role, (Microbial infection) Fatty acid synthetase activity is required for SARS coronavirus-2/SARS-CoV-2 replication. This is Fatty acid synthase (FASN) from Homo sapiens (Human).